A 278-amino-acid polypeptide reads, in one-letter code: Undecaprenyl-diphosphatase (278 aa).

The next 8 helical transmembrane spans lie at 3 to 23 (YILI…IPIS), 42 to 62 (VAYS…IFYF), 88 to 108 (FLVI…LFVI), 112 to 132 (ILGL…IVIY), 152 to 172 (IIIV…RSGM), 190 to 210 (LSFI…VLFS), 225 to 245 (GLLI…NALL), and 253 to 273 (VVLL…LSDI).

Belongs to the UppP family.

The protein resides in the cell membrane. The enzyme catalyses di-trans,octa-cis-undecaprenyl diphosphate + H2O = di-trans,octa-cis-undecaprenyl phosphate + phosphate + H(+). In terms of biological role, catalyzes the dephosphorylation of undecaprenyl diphosphate (UPP). In Saccharolobus solfataricus (strain ATCC 35092 / DSM 1617 / JCM 11322 / P2) (Sulfolobus solfataricus), this protein is Undecaprenyl-diphosphatase.